The sequence spans 897 residues: Interference hedgehog (897 aa).

The first 26 residues, 1–26 (MSVTRGHKSTPSLLLLFLSVLTSLLA), serve as a signal peptide directing secretion. The Extracellular segment spans residues 27–702 (AIPVLQANAP…THNETFNMNP (676 aa)). Ig-like C2-type domains lie at 40–147 (PGVR…ATIS), 148–235 (GDKI…RRLE), 244–336 (PSAA…YIQL), and 342–429 (PRIV…LQVN). Intrachain disulfides connect Cys63–Cys125, Cys169–Cys217, and Cys272–Cys320. Asn96 and Asn99 each carry an N-linked (GlcNAc...) asparagine glycan. Asn296, Asn351, Asn393, and Asn467 each carry an N-linked (GlcNAc...) asparagine glycan. A disulfide bond links Cys363 and Cys411. Residues 434–468 (QAGDGMGTGGMGRSSNRNAHNRKQKQMVPPSAPNV) form a disordered region. Fibronectin type-III domains follow at residues 462 to 571 (PPSA…LQRG) and 579 to 674 (VPEL…TQRP). Positions 498, 504, and 506 each coordinate heparin. Asn530 is a glycosylation site (N-linked (GlcNAc...) asparagine). Arg545 is a heparin binding site. The N-linked (GlcNAc...) asparagine glycan is linked to Asn561. The segment covering 666-682 (LKQGRTQRPRSSTTAQP) has biased composition (polar residues). The disordered stretch occupies residues 666–694 (LKQGRTQRPRSSTTAQPTMHTVDTTTPTH). Low complexity predominate over residues 683-694 (TMHTVDTTTPTH). N-linked (GlcNAc...) asparagine glycosylation is present at Asn695. A helical membrane pass occupies residues 703–723 (LLTGTISGGALLILLVISACL). Residues 724 to 897 (CLCKRRHSRG…SSGSLNSVGV (174 aa)) are Cytoplasmic-facing. Disordered regions lie at residues 773 to 793 (AQQQ…DSQD) and 819 to 849 (MSSS…NLNQ). The segment covering 774–784 (QQQQQQLQQQH) has biased composition (low complexity).

This sequence belongs to the immunoglobulin superfamily. IHOG family. Homodimer. Heterotetramer; 2 iHog chains bind 2 hh chains when facilitated by heparin, heparin is required to promote high-affinity interactions between hh and iHog.

It is found in the membrane. In terms of biological role, mediates response to the active Hedgehog (Hh) protein signal in embryos, functioning upstream or at the level of patched (ptc). This Drosophila mojavensis (Fruit fly) protein is Interference hedgehog.